Reading from the N-terminus, the 376-residue chain is DNA-directed RNA polymerase subunit alpha (376 aa).

Residues 1–259 (MSDCSQNLLY…KHFSIFEKMD (259 aa)) form an alpha N-terminal domain (alpha-NTD) region. Residues 276–376 (KDDILHKLVL…DKIRSKNGKG (101 aa)) form an alpha C-terminal domain (alpha-CTD) region.

The protein belongs to the RNA polymerase alpha chain family. As to quaternary structure, homodimer. The RNAP catalytic core consists of 2 alpha, 1 beta, 1 beta' and 1 omega subunit. When a sigma factor is associated with the core the holoenzyme is formed, which can initiate transcription.

The enzyme catalyses RNA(n) + a ribonucleoside 5'-triphosphate = RNA(n+1) + diphosphate. Functionally, DNA-dependent RNA polymerase catalyzes the transcription of DNA into RNA using the four ribonucleoside triphosphates as substrates. This chain is DNA-directed RNA polymerase subunit alpha, found in Chlamydia abortus (strain DSM 27085 / S26/3) (Chlamydophila abortus).